A 197-amino-acid polypeptide reads, in one-letter code: Large ribosomal subunit protein uL13C (197 aa).

It belongs to the universal ribosomal protein uL13 family. Component of the large ribosomal subunit (LSU). Mature yeast ribosomes consist of a small (40S) and a large (60S) subunit. The 40S small subunit contains 1 molecule of ribosomal RNA (18S rRNA) and at least 33 different proteins. The large 60S subunit contains 3 rRNA molecules (25S, 5.8S and 5S rRNA) and at least 46 different proteins.

The protein localises to the cytoplasm. Its subcellular location is the nucleus. It localises to the nucleolus. Functionally, component of the ribosome, a large ribonucleoprotein complex responsible for the synthesis of proteins in the cell. The small ribosomal subunit (SSU) binds messenger RNAs (mRNAs) and translates the encoded message by selecting cognate aminoacyl-transfer RNA (tRNA) molecules. The large subunit (LSU) contains the ribosomal catalytic site termed the peptidyl transferase center (PTC), which catalyzes the formation of peptide bonds, thereby polymerizing the amino acids delivered by tRNAs into a polypeptide chain. The nascent polypeptides leave the ribosome through a tunnel in the LSU and interact with protein factors that function in enzymatic processing, targeting, and the membrane insertion of nascent chains at the exit of the ribosomal tunnel. In Schizosaccharomyces pombe (strain 972 / ATCC 24843) (Fission yeast), this protein is Large ribosomal subunit protein uL13C (rpl1603).